Reading from the N-terminus, the 299-residue chain is Oxygen-dependent coproporphyrinogen-III oxidase (299 aa).

Residue Ser-92 coordinates substrate. Mn(2+) contacts are provided by His-96 and His-106. Catalysis depends on His-106, which acts as the Proton donor. 108-110 (NVR) contributes to the substrate binding site. His-145 and His-175 together coordinate Mn(2+). Residues 240–275 (YVEFNLVWDRGTLFGLQTGGRTESILMSMPPLVRWE) are important for dimerization. 258–260 (GGR) contacts substrate.

The protein belongs to the aerobic coproporphyrinogen-III oxidase family. In terms of assembly, homodimer. The cofactor is Mn(2+).

Its subcellular location is the cytoplasm. It carries out the reaction coproporphyrinogen III + O2 + 2 H(+) = protoporphyrinogen IX + 2 CO2 + 2 H2O. It participates in porphyrin-containing compound metabolism; protoporphyrin-IX biosynthesis; protoporphyrinogen-IX from coproporphyrinogen-III (O2 route): step 1/1. Functionally, involved in the heme biosynthesis. Catalyzes the aerobic oxidative decarboxylation of propionate groups of rings A and B of coproporphyrinogen-III to yield the vinyl groups in protoporphyrinogen-IX. The chain is Oxygen-dependent coproporphyrinogen-III oxidase from Escherichia coli O7:K1 (strain IAI39 / ExPEC).